The primary structure comprises 600 residues: NADPH-dependent diflavin oxidoreductase 1 (600 aa).

One can recognise a Flavodoxin-like domain in the interval Leu6 to Trp150. Residues Ser12 to Ala17, Ala59 to Gly62, Leu97 to Asn106, and Asp132 contribute to the FMN site. One can recognise an FAD-binding FR-type domain in the interval Ile210–Pro449. FAD is bound by residues Arg354, Arg386 to Ser389, and Gly420 to Ser423. Residues Thr463, Ser518–Arg519, and Lys524–Gln528 each bind NADP(+). FAD is bound at residue Trp599.

The protein belongs to the NADPH-dependent diflavin oxidoreductase NDOR1 family. It in the N-terminal section; belongs to the flavodoxin family. In the C-terminal section; belongs to the flavoprotein pyridine nucleotide cytochrome reductase family. Interacts with ciapin1; as part of the cytosolic iron-sulfur (Fe-S) protein assembly (CIA) machinery. FAD serves as cofactor. It depends on FMN as a cofactor.

It localises to the cytoplasm. The protein localises to the perinuclear region. It catalyses the reaction 2 oxidized [2Fe-2S]-[protein] + NADPH = 2 reduced [2Fe-2S]-[protein] + NADP(+) + H(+). Its function is as follows. NADPH-dependent reductase which is a central component of the cytosolic iron-sulfur (Fe-S) protein assembly (CIA) machinery. Transfers electrons from NADPH via its FAD and FMN prosthetic groups to the [2Fe-2S] cluster of ciapin1, another key component of the CIA machinery. In turn, this reduced cluster provides electrons for assembly of cytosolic iron-sulfur cluster proteins. It can also reduce the [2Fe-2S] cluster of cisd1 and activate this protein implicated in Fe/S cluster repair. The chain is NADPH-dependent diflavin oxidoreductase 1 from Xenopus laevis (African clawed frog).